The sequence spans 95 residues: MEHGEKQITIVDDNGNEQLCEVLFTFESDHFNKSYVLYYPISEQDNEEIEIHASSFTPNENGEDGELEPIETDEEWDMIEETLNTFLDQEEEDEE.

The protein belongs to the UPF0473 family.

The chain is UPF0473 protein BPUM_2377 from Bacillus pumilus (strain SAFR-032).